The following is a 755-amino-acid chain: Tryptophan 2-monooxygenase (755 aa).

Positions 247, 267, 275, and 295 each coordinate FMN. Arg295 provides a ligand contact to substrate.

The protein belongs to the tryptophan 2-monooxygenase family. It depends on FMN as a cofactor.

The enzyme catalyses L-tryptophan + O2 = indole-3-acetamide + CO2 + H2O. It participates in plant hormone metabolism; auxin biosynthesis. The chain is Tryptophan 2-monooxygenase (tms1) from Rhizobium radiobacter (Agrobacterium tumefaciens).